A 302-amino-acid chain; its full sequence is B3 domain-containing protein At3g17010 (302 aa).

Residues Phe-21–Asn-116 constitute a DNA-binding region (TF-B3 1). Residues Pro-123–Ser-192 form a disordered region. The segment covering Ile-135 to Ser-174 has biased composition (basic and acidic residues). Residues Ser-175–Ser-192 show a composition bias toward basic residues. The TF-B3 2 DNA-binding region spans Val-199–Asn-292.

It is found in the nucleus. This Arabidopsis thaliana (Mouse-ear cress) protein is B3 domain-containing protein At3g17010.